We begin with the raw amino-acid sequence, 162 residues long: Caveolin-2 (162 aa).

Residues 1–86 (MGLETEKADV…FEISKYVMYK (86 aa)) are Cytoplasmic-facing. Tyr-19 is subject to Phosphotyrosine; by SRC. Ser-20 and Ser-23 each carry phosphoserine. Tyr-27 bears the Phosphotyrosine; by SRC mark. At Ser-36 the chain carries Phosphoserine. Positions 87–107 (FLTVFLAIPLAFIAGILFATL) form an intramembrane region, helical. The Cytoplasmic portion of the chain corresponds to 108–162 (SCLHIWILMPFVKTCLMVLPSVQTIWKSVTDVIIAPLCTSVGRCFSSVSLQLSQD).

It belongs to the caveolin family. Monomer or homodimer. Interacts with CAV1; the interaction forms a stable heterooligomeric complex that is required for targeting to lipid rafts and for caveolae formation. Tyrosine phosphorylated forms do not form heterooligomers with the Tyr-19-phosphorylated form existing as a monomer or dimer, and the Tyr-27-form as a monomer only. Interacts (tyrosine phosphorylated form) with the SH2 domain-containing proteins, RASA1, NCK1 and SRC. Interacts (tyrosine phosphorylated form) with INSR, the interaction (Tyr-27-phosphorylated form) is increased on insulin stimulation. Interacts (Tyr-19 phosphorylated form) with MAPK1 (phosphorylated form); the interaction, promoted by insulin, leads to nuclear location and MAPK1 activation. Interacts with STAT3; the interaction is increased on insulin-induced tyrosine phosphorylation leading to STAT activation. Post-translationally, phosphorylated on serine and tyrosine residues. CAV1 promotes phosphorylation on Ser-23 which then targets the complex to the plasma membrane, lipid rafts and caveolae. Phosphorylation on Ser-36 appears to modulate mitosis in endothelial cells. Phosphorylation on both Tyr-19 and Tyr-27 is required for insulin-induced 'Ser-727' phosphorylation of STAT3 and its activation. Phosphorylation on Tyr-19 is required for insulin-induced phosphorylation of MAPK1 and DNA binding of STAT3. Tyrosine phosphorylation is induced by both EGF and insulin (By. similarity).

It localises to the nucleus. The protein resides in the cytoplasm. The protein localises to the golgi apparatus membrane. Its subcellular location is the cell membrane. It is found in the membrane. It localises to the caveola. Its function is as follows. May act as a scaffolding protein within caveolar membranes. Interacts directly with G-protein alpha subunits and can functionally regulate their activity. Acts as an accessory protein in conjunction with CAV1 in targeting to lipid rafts and driving caveolae formation. The Ser-36 phosphorylated form has a role in modulating mitosis in endothelial cells. Positive regulator of cellular mitogenesis of the MAPK signaling pathway. Required for the insulin-stimulated nuclear translocation and activation of MAPK1 and STAT3, and the subsequent regulation of cell cycle progression. In Gorilla gorilla gorilla (Western lowland gorilla), this protein is Caveolin-2 (CAV2).